The primary structure comprises 137 residues: Protein shisa-5 (137 aa).

A helical transmembrane segment spans residues 3–23; the sequence is FGATLAVGLTIFVLSVVTIII.

Belongs to the shisa family. Interacts with PDCD6; PDCD6 can stabilize SHISA5.

Its subcellular location is the endoplasmic reticulum membrane. It localises to the nucleus membrane. In terms of biological role, can induce apoptosis in a caspase-dependent manner and plays a role in p53/TP53-dependent apoptosis. The chain is Protein shisa-5 (SHISA5) from Pongo abelii (Sumatran orangutan).